A 207-amino-acid chain; its full sequence is ATP synthase subunit 5, mitochondrial (207 aa).

Belongs to the ATPase delta chain family. F-type ATPases have 2 components, CF(1) - the catalytic core - and CF(0) - the membrane proton channel. CF(1) has five subunits: alpha(3), beta(3), gamma(1), delta(1), epsilon(1). CF(0) has three main subunits: a, b and c.

It is found in the mitochondrion. The protein resides in the mitochondrion inner membrane. Mitochondrial membrane ATP synthase (F(1)F(0) ATP synthase or Complex V) produces ATP from ADP in the presence of a proton gradient across the membrane which is generated by electron transport complexes of the respiratory chain. F-type ATPases consist of two structural domains, F(1) - containing the extramembraneous catalytic core and F(0) - containing the membrane proton channel, linked together by a central stalk and a peripheral stalk. During catalysis, ATP synthesis in the catalytic domain of F(1) is coupled via a rotary mechanism of the central stalk subunits to proton translocation. Part of the complex F(0) domain and the peripheric stalk, which acts as a stator to hold the catalytic alpha(3)beta(3) subcomplex and subunit a/ATP6 static relative to the rotary elements. The chain is ATP synthase subunit 5, mitochondrial (ATP5) from Eremothecium gossypii (strain ATCC 10895 / CBS 109.51 / FGSC 9923 / NRRL Y-1056) (Yeast).